The chain runs to 397 residues: Tryptophan synthase beta chain (397 aa).

Position 91 is an N6-(pyridoxal phosphate)lysine (Lys91).

It belongs to the TrpB family. In terms of assembly, tetramer of two alpha and two beta chains. It depends on pyridoxal 5'-phosphate as a cofactor.

The catalysed reaction is (1S,2R)-1-C-(indol-3-yl)glycerol 3-phosphate + L-serine = D-glyceraldehyde 3-phosphate + L-tryptophan + H2O. The protein operates within amino-acid biosynthesis; L-tryptophan biosynthesis; L-tryptophan from chorismate: step 5/5. Its function is as follows. The beta subunit is responsible for the synthesis of L-tryptophan from indole and L-serine. This is Tryptophan synthase beta chain from Bacillus cereus (strain ATCC 14579 / DSM 31 / CCUG 7414 / JCM 2152 / NBRC 15305 / NCIMB 9373 / NCTC 2599 / NRRL B-3711).